Reading from the N-terminus, the 95-residue chain is Progonadoliberin-1 (95 aa).

The first 22 residues, 1-22 (MAPQTFALWLLLVGTLLGQGCC), serve as a signal peptide directing secretion. The residue at position 23 (glutamine 23) is a Pyrrolidone carboxylic acid. Glycine 32 carries the glycine amide modification.

It belongs to the GnRH family.

It is found in the secreted. Stimulates the secretion of gonadotropins. The polypeptide is Progonadoliberin-1 (gnrh1) (Morone saxatilis (Striped bass)).